Consider the following 506-residue polypeptide: UDP-N-acetylmuramoyl-L-alanyl-D-glutamate--2,6-diaminopimelate ligase (506 aa).

Ser42 contacts UDP-N-acetyl-alpha-D-muramoyl-L-alanyl-D-glutamate. Position 125–131 (125–131 (GTSGKTT)) interacts with ATP. UDP-N-acetyl-alpha-D-muramoyl-L-alanyl-D-glutamate contacts are provided by residues 166–167 (TT), Ser193, and Arg201. At Lys233 the chain carries N6-carboxylysine. Meso-2,6-diaminopimelate-binding positions include Arg395, 419-422 (DNPR), Gly475, and Glu479. The Meso-diaminopimelate recognition motif signature appears at 419-422 (DNPR).

Belongs to the MurCDEF family. MurE subfamily. Requires Mg(2+) as cofactor. Post-translationally, carboxylation is probably crucial for Mg(2+) binding and, consequently, for the gamma-phosphate positioning of ATP.

Its subcellular location is the cytoplasm. The catalysed reaction is UDP-N-acetyl-alpha-D-muramoyl-L-alanyl-D-glutamate + meso-2,6-diaminopimelate + ATP = UDP-N-acetyl-alpha-D-muramoyl-L-alanyl-gamma-D-glutamyl-meso-2,6-diaminopimelate + ADP + phosphate + H(+). It participates in cell wall biogenesis; peptidoglycan biosynthesis. In terms of biological role, catalyzes the addition of meso-diaminopimelic acid to the nucleotide precursor UDP-N-acetylmuramoyl-L-alanyl-D-glutamate (UMAG) in the biosynthesis of bacterial cell-wall peptidoglycan. In Streptomyces coelicolor (strain ATCC BAA-471 / A3(2) / M145), this protein is UDP-N-acetylmuramoyl-L-alanyl-D-glutamate--2,6-diaminopimelate ligase.